A 156-amino-acid chain; its full sequence is Small ribosomal subunit protein uS7 (156 aa).

It belongs to the universal ribosomal protein uS7 family. As to quaternary structure, part of the 30S ribosomal subunit. Contacts proteins S9 and S11.

Its function is as follows. One of the primary rRNA binding proteins, it binds directly to 16S rRNA where it nucleates assembly of the head domain of the 30S subunit. Is located at the subunit interface close to the decoding center, probably blocks exit of the E-site tRNA. The chain is Small ribosomal subunit protein uS7 from Acaryochloris marina (strain MBIC 11017).